We begin with the raw amino-acid sequence, 443 residues long: Threonine/serine transporter TdcC (443 aa).

The next 11 helical transmembrane spans lie at 22-42, 44-64, 97-117, 140-160, 163-183, 207-227, 261-281, 312-332, 366-386, 389-409, and 423-443; these read TTWTLGLFGTAIGAGVLFFPI, AGFGGLIPILLMLVLAYPIAF, GVVITFLYFFAICPLLWIYGV, FVALFLLLLMAFVIWFGKDLM, VMSYLVWPFIASLVLISLSLI, ILITVWLGISIMVFSFNFSPI, MLMVAVVMFFAFSCLFTLSPA, AITLEYAASIIALVAIFKSFF, ISMIFIMGSTWVVAYANPNIL, IEAMGAPIIASLLCLLPMYAI, and DNVFVTVIGLLTILNIVYKLF.

This sequence belongs to the amino acid/polyamine transporter 2 family. SdaC/TdcC subfamily.

The protein localises to the cell inner membrane. The enzyme catalyses L-threonine(in) + H(+)(in) = L-threonine(out) + H(+)(out). It catalyses the reaction L-serine(in) + H(+)(in) = L-serine(out) + H(+)(out). Functionally, involved in the import of threonine and serine into the cell, with the concomitant import of a proton (symport system). The chain is Threonine/serine transporter TdcC from Escherichia coli O45:K1 (strain S88 / ExPEC).